The following is a 319-amino-acid chain: Epoxyqueuosine reductase (319 aa).

Asp-146 acts as the Proton donor in catalysis. A 4Fe-4S ferredoxin-type domain is found at 188 to 220 (ASLPADQPARSLCGHCQRCLPACPTAAITEPFV). Cys-200, Cys-203, Cys-206, Cys-210, Cys-226, Cys-250, Cys-253, and Cys-257 together coordinate [4Fe-4S] cluster.

This sequence belongs to the QueG family. As to quaternary structure, monomer. The cofactor is cob(II)alamin. Requires [4Fe-4S] cluster as cofactor.

The protein resides in the cytoplasm. The enzyme catalyses epoxyqueuosine(34) in tRNA + AH2 = queuosine(34) in tRNA + A + H2O. Its pathway is tRNA modification; tRNA-queuosine biosynthesis. In terms of biological role, catalyzes the conversion of epoxyqueuosine (oQ) to queuosine (Q), which is a hypermodified base found in the wobble positions of tRNA(Asp), tRNA(Asn), tRNA(His) and tRNA(Tyr). The chain is Epoxyqueuosine reductase from Synechococcus sp. (strain RCC307).